The following is a 272-amino-acid chain: Ribonuclease HII (272 aa).

In terms of domain architecture, RNase H type-2 spans 87–272 (KYVAGVDEVG…HRMSFLKNIL (186 aa)). Aspartate 93, glutamate 94, and aspartate 188 together coordinate a divalent metal cation.

The protein belongs to the RNase HII family. Mn(2+) is required as a cofactor. The cofactor is Mg(2+).

Its subcellular location is the cytoplasm. It carries out the reaction Endonucleolytic cleavage to 5'-phosphomonoester.. Functionally, endonuclease that specifically degrades the RNA of RNA-DNA hybrids. This is Ribonuclease HII from Clostridium perfringens (strain 13 / Type A).